The primary structure comprises 309 residues: MALRLSFMGTPDFSVPILHALLDAGHDVVAVYSQPPRPAGRRRLKLIPSPVQNAAEERSIPTFTPQTLKTAEQQAQFAALSVDAAIVVAYGLLLPKAILETPRFGCFNAHASLLPRWRGAAPIQRAIMAGDKETGMMIMKMDEGLDTGSIVLSRSIPITDTTTTDKLSNELSYIGAELMIETLSTLEKGQLKLIPQSKEGITYAAKIKKEETRIDWKKPAEFIHRHIRALSPSPGCWCNMNIGGREERVKILESRLATGTSLEIGRIEPNSLIVHCGQGRIEITTLQRSGGKILDSATFLRGAHISAVF.

Residue 112-115 (SLLP) participates in (6S)-5,6,7,8-tetrahydrofolate binding.

Belongs to the Fmt family.

The enzyme catalyses L-methionyl-tRNA(fMet) + (6R)-10-formyltetrahydrofolate = N-formyl-L-methionyl-tRNA(fMet) + (6S)-5,6,7,8-tetrahydrofolate + H(+). Functionally, attaches a formyl group to the free amino group of methionyl-tRNA(fMet). The formyl group appears to play a dual role in the initiator identity of N-formylmethionyl-tRNA by promoting its recognition by IF2 and preventing the misappropriation of this tRNA by the elongation apparatus. The chain is Methionyl-tRNA formyltransferase from Bartonella tribocorum (strain CIP 105476 / IBS 506).